Reading from the N-terminus, the 806-residue chain is Protein bimA (806 aa).

TPR repeat units follow at residues 76 to 109 (LGCS…WTSR) and 127 to 160 (AAVL…NPFM). Disordered stretches follow at residues 202 to 348 (VLPP…HRLG), 353 to 372 (TVSG…QGVG), and 401 to 460 (REVK…ASSK). A compositionally biased stretch (polar residues) spans 224–237 (AGTTRSDSTSTHGS). Positions 246-257 (GSTVSVASSGTG) are enriched in low complexity. The tract at residues 260–399 (LPREGMETPG…ISSTALGVKE (140 aa)) is bimA domain. The segment covering 328–348 (TKFESDEGHTERDAGMGHRLG) has biased composition (basic and acidic residues). Polar residues predominate over residues 408–421 (TTGNKARTTTSSNV). Residues 432–445 (HAGEIHDGDSKEYR) show a composition bias toward basic and acidic residues. Positions 446–459 (GTSSTSNGSQNASS) are enriched in low complexity. 6 TPR repeats span residues 513–546 (PWVL…APSR), 581–614 (PEAW…DPHF), 616–648 (YGFT…DSRH), 649–682 (YNAW…NPSN), 684–716 (VLIC…APHS), and 751–784 (ANVH…DPKA).

Belongs to the APC3/CDC27 family.

The protein resides in the nucleus. Its function is as follows. Required for the completion of mitosis in Aspergillus nidulans. This chain is Protein bimA (bimA), found in Emericella nidulans (strain FGSC A4 / ATCC 38163 / CBS 112.46 / NRRL 194 / M139) (Aspergillus nidulans).